A 49-amino-acid polypeptide reads, in one-letter code: Osteocalcin (49 aa).

Residues Tyr-1–Gly-47 enclose the Gla domain. Positions 17, 21, 24, and 30 each coordinate Ca(2+). Glu-17, Glu-21, and Glu-24 each carry 4-carboxyglutamate. Cys-23 and Cys-29 form a disulfide bridge.

Belongs to the osteocalcin/matrix Gla protein family. Gamma-carboxyglutamate residues are formed by vitamin K dependent carboxylation by GGCX. These residues are essential for the binding of calcium. Decarboxylation promotes the hormone activity.

It localises to the secreted. In terms of biological role, the carboxylated form is one of the main organic components of the bone matrix, which constitutes 1-2% of the total bone protein. It acts as a negative regulator of bone formation and is required to limit bone formation without impairing bone resorption or mineralization. The carboxylated form binds strongly to apatite and calcium. The uncarboxylated form acts as a hormone secreted by osteoblasts, which regulates different cellular processes, such as energy metabolism, male fertility and brain development. Regulates of energy metabolism by acting as a hormone favoring pancreatic beta-cell proliferation, insulin secretion and sensitivity and energy expenditure. Uncarboxylated osteocalcin hormone also promotes testosterone production in the testes: acts as a ligand for G protein-coupled receptor GPRC6A at the surface of Leydig cells, initiating a signaling response that promotes the expression of enzymes required for testosterone synthesis in a CREB-dependent manner. Also acts as a regulator of brain development: osteocalcin hormone crosses the blood-brain barrier and acts as a ligand for GPR158 on neurons, initiating a signaling response that prevents neuronal apoptosis in the hippocampus, favors the synthesis of all monoamine neurotransmitters and inhibits that of gamma-aminobutyric acid (GABA). Osteocalcin also crosses the placenta during pregnancy and maternal osteocalcin is required for fetal brain development. The polypeptide is Osteocalcin (BGLAP) (Canis lupus familiaris (Dog)).